We begin with the raw amino-acid sequence, 176 residues long: MTNIRKSHPLMKIVNDAFIDLPAPSNISWWWNFGSLLGVCLMMQILTGLFLAMHYTSDTATAFNSVTHICRDVNYGWLLRYLHANGASMFFICLYLHIGRGLYYGSYTYTETWNVGIILLFAVMATAFMGYVLPWGQMSSWGATVITNLLSAIPYIGTDLVGWIWGGFSVDKATLT.

The next 3 helical transmembrane spans lie at 33–53, 77–98, and 113–133; these read FGSLLGVCLMMQILTGLFLAM, WLLRYLHANGASMFFICLYLHI, and WNVGIILLFAVMATAFMGYVL. H83 and H97 together coordinate heme b.

Belongs to the cytochrome b family. In terms of assembly, the cytochrome bc1 complex contains 11 subunits: 3 respiratory subunits (MT-CYB, CYC1 and UQCRFS1), 2 core proteins (UQCRC1 and UQCRC2) and 6 low-molecular weight proteins (UQCRH/QCR6, UQCRB/QCR7, UQCRQ/QCR8, UQCR10/QCR9, UQCR11/QCR10 and a cleavage product of UQCRFS1). This cytochrome bc1 complex then forms a dimer. Requires heme b as cofactor.

It is found in the mitochondrion inner membrane. Functionally, component of the ubiquinol-cytochrome c reductase complex (complex III or cytochrome b-c1 complex) that is part of the mitochondrial respiratory chain. The b-c1 complex mediates electron transfer from ubiquinol to cytochrome c. Contributes to the generation of a proton gradient across the mitochondrial membrane that is then used for ATP synthesis. The polypeptide is Cytochrome b (MT-CYB) (Promops centralis (Big crested mastiff bat)).